The following is a 322-amino-acid chain: Zinc finger C2HC domain-containing protein CBG14627 (322 aa).

2 C2HC/C3H-type zinc fingers span residues 9–38 and 119–148; these read PVYP…LATL and DYVQ…QTTR. The Zn(2+) site is built by Cys-13, Cys-16, His-28, Cys-32, Cys-123, Cys-126, His-138, and Cys-142. Positions 144-322 are disordered; sequence EQTTRKQGGK…SRNNSRSRIF (179 aa). Polar residues predominate over residues 148–168; the sequence is RKQGGKSSAGNRGLTSNNYRS. The segment covering 171–219 has biased composition (basic and acidic residues); the sequence is SKHEGRKQESSSRNGSAERKTTTRGRDGSLSRARRDDSNDLTNRRKSLE. A compositionally biased stretch (polar residues) spans 220–238; that stretch reads TRSQLTTGQANNRTTSLSA. Positions 278 to 294 are enriched in low complexity; it reads TTTTASASRSGSGSSSR. Positions 296-305 are enriched in basic and acidic residues; it reads RTRDESRESR. Residues 311–322 are compositionally biased toward low complexity; sequence SNSRNNSRSRIF.

Belongs to the ZC2HC1 family. Requires Zn(2+) as cofactor.

In Caenorhabditis briggsae, this protein is Zinc finger C2HC domain-containing protein CBG14627.